Consider the following 101-residue polypeptide: MAGQKIRIRLKAYDHEAIDASARKIVETVTRTGARVVGPVPLPTEKNVYCVIRSPHKYKDSREHFEMRTHKRLIDILEPTPKTVDALMRIDLPASVDVNIQ.

It belongs to the universal ribosomal protein uS10 family. As to quaternary structure, part of the 30S ribosomal subunit.

Functionally, involved in the binding of tRNA to the ribosomes. In Saccharopolyspora erythraea (strain ATCC 11635 / DSM 40517 / JCM 4748 / NBRC 13426 / NCIMB 8594 / NRRL 2338), this protein is Small ribosomal subunit protein uS10.